We begin with the raw amino-acid sequence, 865 residues long: cGMP-specific 3',5'-cyclic phosphodiesterase (865 aa).

Ser-92 carries the post-translational modification Phosphoserine. 2 GAF domains span residues 154 to 304 (DVTA…GIVL) and 336 to 493 (SLEV…GLGI). One can recognise a PDEase domain in the interval 526–850 (ETRELQALSA…QKWQALAEQQ (325 aa)). Residue His-603 is the Proton donor of the active site. Zn(2+)-binding residues include His-607, His-643, Asp-644, and Asp-754. Asp-644 contacts Mg(2+). Gln-807 is a binding site for 3',5'-cyclic GMP.

It belongs to the cyclic nucleotide phosphodiesterase family. Zn(2+) is required as a cofactor. The cofactor is Mg(2+). Post-translationally, phosphorylation is regulated by binding of cGMP to the two allosteric sites. Phosphorylation by PRKG1 leads to its activation.

It carries out the reaction 3',5'-cyclic GMP + H2O = GMP + H(+). It functions in the pathway purine metabolism; 3',5'-cyclic GMP degradation; GMP from 3',5'-cyclic GMP: step 1/1. Its function is as follows. Plays a role in signal transduction by regulating the intracellular concentration of cyclic nucleotides. This phosphodiesterase catalyzes the specific hydrolysis of cGMP to 5'-GMP. Specifically regulates nitric-oxide-generated cGMP. The chain is cGMP-specific 3',5'-cyclic phosphodiesterase (Pde5a) from Mus musculus (Mouse).